The sequence spans 831 residues: MTDNQEIKPKKLTLGNSKLLLNKSFDSLTGVQSFVNAKSKTLVEVRKSSIGSTTTISLNKERNSLDQTVIDSNKEEFNRRLSILKKAAEQSKLYDSAQISTLSKLASINQSVNSKNEQFTTDKAVEQKQQDIEDTKVEIGTKIVQDDEDIRSQIPNKKKETFAKSLLVGMRTRYGIEAESALEKIGDNKVVVPKIKLEEPKKFKKADLFNMLSDDENGSGRTRSLASIKRAREKEKRKLVSQIPEKVYREVTIPEVIGVGDLANAMSERVADVIKELMKLGILANASQTIDADTAELVATNLGHTVTRVQESDVENVLINDDKVEDLRTRAPVVTVMGHVDHGKTSLLDALKSTDIAAGELGGITQHIGAYRVTLSDCKAITFIDTPGHEAFSEMRSRGAKVTDIVIIVVAADDGIKTQTVEAINHAKAAGVPIIVAINKIDKPDIDIERIKNELYVHEIIGEEAGGDVIFIPISALKKINLDKLEEAILLISEMQDLKASPFGLAAGVVIESKIEKGRGTLTTILVQRGTLRNGDIIIAGTSYGKVKKMINDKGREILEATPSVPVEIQGLNEVPFAGDQFNVVQNEKQAKDIAEYRIRLAKEKKISVTSRSSLEELLLKASGNSKIKELPLIIKCDVQGSIEAIAGSLLKLPSDEIKLRILHSGVGPITESDVSLAHVSSAIVVGFNVRAGTNALTAAEKTKVDIRYYSIIYNLIDDVKAIMSGMLDPIVREQYIGSVEIRQVFNITKIGKIAGSYVTKGIIKKGAGVRLLRDNVVIHAGKLKTLKRFKDEVKEVREGYECGIAFENYEDIREGDTVEVFELVQEQRQL.

Residues 329 to 499 (TRAPVVTVMG…LLISEMQDLK (171 aa)) enclose the tr-type G domain. Residues 338–345 (GHVDHGKT) form a G1 region. 338-345 (GHVDHGKT) is a GTP binding site. Residues 363–367 (GITQH) are G2. Residues 385–388 (DTPG) are G3. GTP-binding positions include 385-389 (DTPGH) and 439-442 (NKID). The G4 stretch occupies residues 439–442 (NKID). Residues 475-477 (SAL) are G5.

This sequence belongs to the TRAFAC class translation factor GTPase superfamily. Classic translation factor GTPase family. IF-2 subfamily.

The protein localises to the cytoplasm. Functionally, one of the essential components for the initiation of protein synthesis. Protects formylmethionyl-tRNA from spontaneous hydrolysis and promotes its binding to the 30S ribosomal subunits. Also involved in the hydrolysis of GTP during the formation of the 70S ribosomal complex. This chain is Translation initiation factor IF-2, found in Rickettsia typhi (strain ATCC VR-144 / Wilmington).